The following is a 327-amino-acid chain: Zinc finger protein 444 (327 aa).

Methionine 1 is modified (N-acetylmethionine). Residue lysine 8 forms a Glycyl lysine isopeptide (Lys-Gly) (interchain with G-Cter in SUMO2) linkage. Serine 18 and serine 104 each carry phosphoserine. Residues 20–104 (WHRFRRFHLG…LEELWGPAAS (85 aa)) enclose the SCAN box domain. Residues 101–171 (PAASPDGSSA…SPPLAPGLPA (71 aa)) are disordered. Positions 106–118 (DGSSATRVPQDVT) are enriched in polar residues. Residues 134–148 (PLAGTAPGAEGPAPG) are compositionally biased toward low complexity. C2H2-type zinc fingers lie at residues 179 to 201 (TSCP…RQSH) and 207 to 229 (HACP…RDTH). Lysine 190 participates in a covalent cross-link: Glycyl lysine isopeptide (Lys-Gly) (interchain with G-Cter in SUMO2). Residues 220 to 243 (EHLRRHRDTHPGSPGSPGPALRPL) form a disordered region. The residue at position 235 (serine 235) is a Phosphoserine. C2H2-type zinc fingers lie at residues 250–272 (HACC…RKTH) and 278–300 (FACW…QRIH). The segment covering 305 to 314 (ASAQGAVAPG) has biased composition (low complexity). The segment at 305–327 (ASAQGAVAPGPDGGGPFPPWPLG) is disordered.

The protein belongs to the krueppel C2H2-type zinc-finger protein family.

The protein localises to the nucleus. In terms of biological role, transcriptional regulator. Binds to the 5'-flanking critical region of the SCARF1 promoter. This chain is Zinc finger protein 444 (ZNF444), found in Homo sapiens (Human).